The sequence spans 1405 residues: Xanthine dehydrogenase (1405 aa).

Residues 17 to 104 form the 2Fe-2S ferredoxin-type domain; that stretch reads NKLTFYVNGV…GKHLITVEGI (88 aa). The [2Fe-2S] cluster site is built by Cys56, Cys61, Cys64, Cys86, Cys125, Cys128, Cys161, and Cys163. In terms of domain architecture, FAD-binding PCMH-type spans 288-474; sequence FGNEQKVWFR…TKIFVPETVP (187 aa). FAD contacts are provided by residues 316–323, Phe397, 407–411, Asp420, Ile464, and Lys483; these read IVGGASEI and TPAGN. Gln833 and Phe864 together coordinate Mo-molybdopterin. Substrate contacts are provided by Glu868 and Arg946. Arg978 contributes to the Mo-molybdopterin binding site. Phe980 is a binding site for substrate. Mo-molybdopterin is bound at residue Ala1147. The active-site Proton acceptor is the Glu1333.

Belongs to the xanthine dehydrogenase family. In terms of assembly, homodimer. Mo-molybdopterin is required as a cofactor. [2Fe-2S] cluster serves as cofactor. It depends on FAD as a cofactor.

It localises to the cytoplasm. The catalysed reaction is hypoxanthine + NAD(+) + H2O = xanthine + NADH + H(+). It carries out the reaction xanthine + NAD(+) + H2O = urate + NADH + H(+). Its pathway is purine metabolism. Its activity is regulated as follows. Completely inhibited by allopurinol and significantly inhibited by adenine. Inhibited by Fe(2+), Cd(2+) and Zn(2+) and strongly inhibited by Cu(2+). Mg(2+) and Mo(2+) have no effect on activity. Functionally, key enzyme in purine degradation. Catalyzes the oxidation of hypoxanthine to xanthine. Catalyzes the oxidation of xanthine to uric acid. Oxidizes xanthine, hypoxanthine and pterine at high rates. Can also act on purine and guanine. The polypeptide is Xanthine dehydrogenase (Blastobotrys adeninivorans (Yeast)).